Here is a 369-residue protein sequence, read N- to C-terminus: Putative 2-aminoethylphosphonate import ATP-binding protein PhnT (369 aa).

The 232-residue stretch at 19–250 (IVLDSLRVAY…PPNRFASEFL (232 aa)) folds into the ABC transporter domain. Position 51 to 58 (51 to 58 (GPSGSGKT)) interacts with ATP.

The protein belongs to the ABC transporter superfamily. 2-aminoethylphosphonate importer (TC 3.A.1.11.5) family.

It localises to the cell inner membrane. Its function is as follows. Probably part of the PhnSTUV complex (TC 3.A.1.11.5) involved in 2-aminoethylphosphonate import. Probably responsible for energy coupling to the transport system. This is Putative 2-aminoethylphosphonate import ATP-binding protein PhnT (phnT) from Salmonella choleraesuis (strain SC-B67).